A 313-amino-acid chain; its full sequence is Ribosomal RNA small subunit methyltransferase H (313 aa).

S-adenosyl-L-methionine-binding positions include 36 to 38 (GGH), aspartate 56, phenylalanine 80, aspartate 102, and glutamine 109.

This sequence belongs to the methyltransferase superfamily. RsmH family.

The protein localises to the cytoplasm. It carries out the reaction cytidine(1402) in 16S rRNA + S-adenosyl-L-methionine = N(4)-methylcytidine(1402) in 16S rRNA + S-adenosyl-L-homocysteine + H(+). Its function is as follows. Specifically methylates the N4 position of cytidine in position 1402 (C1402) of 16S rRNA. This Actinobacillus pleuropneumoniae serotype 3 (strain JL03) protein is Ribosomal RNA small subunit methyltransferase H.